Reading from the N-terminus, the 215-residue chain is MVDLFLGKVLVKNNKDRDELDTEREIILRLQNRILMLFFGSGDSEKCQDFAPTLKDFYKKLTDEFYVERSAQLVLLYISLDSSEEQQEKFLKELPKRCLFLPYEDPYRQELGVMFEVRDLPRVVVLRPDCSVLSPNAVSEICTLGTDCFRNWQEGAELIDRNFMMNEEFDEGKMRSMTDPIRRIKYKVEDEKKKKKKRDDDDDDDDGGGGGGPWG.

The 164-residue stretch at 1 to 164 (MVDLFLGKVL…GAELIDRNFM (164 aa)) folds into the Thioredoxin; atypical domain. The segment at 190-215 (DEKKKKKKRDDDDDDDDGGGGGGPWG) is disordered.

Belongs to the nucleoredoxin family.

The protein localises to the cell projection. It localises to the cilium. Its subcellular location is the photoreceptor outer segment. Plays an important role in retinal cone photoreceptor survival. May play a role in cone cell viability, slowing down cone degeneration, does not seem to play a role in degenerating rods. The polypeptide is Nucleoredoxin-like protein 1 (nxnl1) (Danio rerio (Zebrafish)).